We begin with the raw amino-acid sequence, 828 residues long: Vacuolar transporter chaperone complex subunit 2 (828 aa).

Residues 1–146 (MLFGVKLANE…PKYPSVKSLL (146 aa)) enclose the SPX domain. Topologically, residues 1-693 (MLFGVKLANE…EAKVWLANER (693 aa)) are cytoplasmic. The important for inositol polyphosphate binding stretch occupies residues 127–134 (KIVKKHDK). A phosphoserine mark is found at S182, S187, S196, S264, S583, S615, and S616. Residues 580–636 (RRLSNLKEPQHQAAVPVSQEENERITSQGDLEADGSSDEETEQEPHSKRSKKVRRRK) are disordered. Acidic residues predominate over residues 610–621 (LEADGSSDEETE). Residue T620 is modified to Phosphothreonine. S626 is modified (phosphoserine). Positions 627–636 (KRSKKVRRRK) are enriched in basic residues. Position 657 is a phosphoserine (S657). A helical transmembrane segment spans residues 694-716 (TFNRWLSVTSLLSVLTFSIYNSV). Over 717-727 (KKAEYPTLANY) the chain is Vacuolar. A helical transmembrane segment spans residues 728 to 748 (MAYVYFGLTIFCALWSYSIYM). Topologically, residues 749-766 (KRVDIIQQRSGQHLDAPL) are cytoplasmic. The chain crosses the membrane as a helical span at residues 767–787 (GPVLVSIVLFVTLVVNFVMAF). The Vacuolar portion of the chain corresponds to 788–828 (RNAAKSRQELQIQNLEVPERIPEVLRPLQNYLFKLMGPSSD).

It belongs to the VTC2/3 family. As to quaternary structure, the VTC core complex is an integral membrane heterooligomer composed of the catalytic subunit VTC4 and the accessory subunits VTC1, VTC2 and VTC3. The complex exists in 2 different sub-complexes: VTC1-VTC2-VCT4 and VCT1-VTC3-VTC4. The VCT1-VTC3-VTC4 subcomplex is mostly found on the vacuolar membrane. The VTC1-VTC2-VCT4 subcomplex is observed in the cell periphery, probably ER and nuclear envelope, but localizes to the vacuole under phosphate starvation. Each subunit contains 3 transmembrane helices. VTC1 is a small membrane protein without hydrophilic domain. VTC2, VTC3 and VTC4 are related and have 2 hydrophilic domains that face the cytosol, an N-terminal SPX domain and the central core domain. The central core in VTC4 is the catalytic domain, with the essential catalytic lysine replaced by isoleucine and leucine in VTC2 and VTC3, respectively. The core complex associates with the accessory subunit VTC5. The complex interacts with the v-SNARE NYV1 and with the V(0) subunit of V-ATPase VPH1.

The protein localises to the vacuole membrane. The protein resides in the cytoplasm. It localises to the cell cortex. Its subcellular location is the endoplasmic reticulum membrane. It is found in the cytoplasmic vesicle. The protein localises to the autophagosome membrane. Accessory subunit of the vacuolar transporter chaperone (VTC) complex. The VTC complex acts as a vacuolar polyphosphate polymerase that catalyzes the synthesis of inorganic polyphosphate (polyP) via transfer of phosphate from ATP to a growing polyP chain, releasing ADP. VTC exposes its catalytic domain VTC4 to the cytosol, where the growing polyP chain winds through a tunnel-shaped pocket, integrating cytoplasmic polymer synthesis with polyP membrane translocation. The VTC complex carries 9 vacuolar transmembrane domains, which are likely to constitute the translocation channel into the organelle lumen. PolyP synthesis is tightly coupled to its transport into the vacuole lumen, in order to avoid otherwise toxic intermediates in the cytosol, and it depends on the proton gradient across the membrane, formed by V-ATPase. Binds inositol hexakisphosphate (Ins6P) and similar inositol polyphosphates, such as 5-diphospho-inositol pentakisphosphate (5-InsP7); these are important intracellular signaling molecules. Inositol polyphosphate binding promotes vacuolar polyphosphate synthesis. The VTC complex also plays a role in vacuolar membrane fusion. Required for SEC18/NSF activity in SNARE priming, membrane binding of LMA1 and V(0) trans-complex formation. The protein is Vacuolar transporter chaperone complex subunit 2 of Saccharomyces cerevisiae (strain ATCC 204508 / S288c) (Baker's yeast).